An 835-amino-acid chain; its full sequence is Ion-translocating oxidoreductase complex subunit C (835 aa).

2 consecutive 4Fe-4S ferredoxin-type domains span residues 368–397 (YAPP…QQLY) and 407–436 (KSEE…IQYF). Positions 377, 380, 383, 387, 416, 419, 422, and 426 each coordinate [4Fe-4S] cluster. A compositionally biased stretch (basic and acidic residues) spans 468–489 (AREEQERKARAQKAMEARRQEM). Disordered stretches follow at residues 468–492 (AREE…MKTA), 540–574 (QRKA…SKSA), 586–618 (KAAQ…AEDP), 634–666 (KAAQ…ADDP), 682–714 (KAAQ…ADDP), 730–762 (KAAQ…AEDP), and 778–811 (KAAQ…EDPR). Polar residues predominate over residues 552–561 (TQNTDVSQVE). Polar residues predominate over residues 648-657 (SSSNTLSVGN). Composition is skewed to polar residues over residues 745–756 (SSDTLSVGNETE) and 793–804 (SSDTLSVGNETE).

This sequence belongs to the 4Fe4S bacterial-type ferredoxin family. RnfC subfamily. The complex is composed of six subunits: RnfA, RnfB, RnfC, RnfD, RnfE and RnfG. The cofactor is [4Fe-4S] cluster.

The protein localises to the cell inner membrane. In terms of biological role, part of a membrane-bound complex that couples electron transfer with translocation of ions across the membrane. The protein is Ion-translocating oxidoreductase complex subunit C of Pasteurella multocida (strain Pm70).